Consider the following 353-residue polypeptide: Dihydroorotate dehydrogenase (quinone) (353 aa).

Residues 67–71 (AGFDK) and Thr-91 contribute to the FMN site. Residue Lys-71 participates in substrate binding. 116 to 120 (NRMGF) is a binding site for substrate. FMN contacts are provided by Asn-144 and Asn-177. Asn-177 is a substrate binding site. The active-site Nucleophile is Ser-180. Asn-182 serves as a coordination point for substrate. Residues Lys-215 and Thr-243 each contribute to the FMN site. 244–245 (NT) lines the substrate pocket. Residues Gly-264, Gly-293, and 314–315 (YT) each bind FMN.

Belongs to the dihydroorotate dehydrogenase family. Type 2 subfamily. In terms of assembly, monomer. FMN is required as a cofactor.

The protein resides in the cell membrane. The enzyme catalyses (S)-dihydroorotate + a quinone = orotate + a quinol. It participates in pyrimidine metabolism; UMP biosynthesis via de novo pathway; orotate from (S)-dihydroorotate (quinone route): step 1/1. Its function is as follows. Catalyzes the conversion of dihydroorotate to orotate with quinone as electron acceptor. This chain is Dihydroorotate dehydrogenase (quinone), found in Gloeobacter violaceus (strain ATCC 29082 / PCC 7421).